The primary structure comprises 352 residues: S-adenosylmethionine:tRNA ribosyltransferase-isomerase (352 aa).

The protein belongs to the QueA family. In terms of assembly, monomer.

The protein localises to the cytoplasm. The catalysed reaction is 7-aminomethyl-7-carbaguanosine(34) in tRNA + S-adenosyl-L-methionine = epoxyqueuosine(34) in tRNA + adenine + L-methionine + 2 H(+). Its pathway is tRNA modification; tRNA-queuosine biosynthesis. Functionally, transfers and isomerizes the ribose moiety from AdoMet to the 7-aminomethyl group of 7-deazaguanine (preQ1-tRNA) to give epoxyqueuosine (oQ-tRNA). The protein is S-adenosylmethionine:tRNA ribosyltransferase-isomerase of Allorhizobium ampelinum (strain ATCC BAA-846 / DSM 112012 / S4) (Agrobacterium vitis (strain S4)).